A 131-amino-acid polypeptide reads, in one-letter code: Small ribosomal subunit protein uS8 (131 aa).

Belongs to the universal ribosomal protein uS8 family. In terms of assembly, part of the 30S ribosomal subunit. Contacts proteins S5 and S12.

In terms of biological role, one of the primary rRNA binding proteins, it binds directly to 16S rRNA central domain where it helps coordinate assembly of the platform of the 30S subunit. The protein is Small ribosomal subunit protein uS8 of Chromobacterium violaceum (strain ATCC 12472 / DSM 30191 / JCM 1249 / CCUG 213 / NBRC 12614 / NCIMB 9131 / NCTC 9757 / MK).